The sequence spans 950 residues: MGVPAFFRWLSRKYPSIIVNCVEEKPKECNGVKIPVDASKPNPNDVEFDNLYLDMNGIIHPCTHPEDKPAPKNEDEMMVAIFEYIDRLFSIVRPRRLLYMAIDGVAPRAKMNQQRSRRFRASKEGMEAAVEKQRVREEILAKGGFLPPEEIKERFDSNCITPGTEFMDNLAKCLRYYIADRLNNDPGWKNLTVILSDASAPGEGEHKIMDYIRRQRAQPNHDPNTHHCLCGADADLIMLGLATHEPNFTIIREEFKPNKPKPCGLCNQFGHEVKDCEGLLREKKVKHDELADSLPCAEGEFIFLRLNVLREYLERELTMASLPFTFDVERSIDDWVFMCFFVGNDFLPHLPSLEIRENAIDRLVNIYKNVVHKTGGYLTESGYVNLQRVQMIMLAVGEVEDSIFKKRKDDEDSFRRRQKEKRKRMKRDQPAFTPSGILTPHALGSRNSPGSQVASNPRQAAYEMRMQNNSSPSISPNTSFTSDGSPSPIGGIKRKAEDSDSEPEPEDNVRLWEAGWKQRYYKNKFDADAADEKFRRKVVQSYVEGLCWVLRYYYQGCASWKWYYPFHYAPFASDFEGIADMPSDFEKGTKPFKPLEQLMGVFPAASGNFLPPSWRKLMSDPDSSIIDFYPEDFAIDLNGKKYAWQGVALLPFVDERRLRAALEEVYPDLTPEETRRNSLGGDVLFVGKHHPLHDFILELYQTGSTEPVDVPPELCHGIQGKFSLDEEAILPDQIVCSPVPMLRDLTQNTVVSINFKDPQFAEDYIFKAVMLPGARKPAAVLKPSDWEKSSNGRQWKPQLGFNRDRRPVHLDQAAFRTLGHVMPRGSGTGIYSNAAPPPATYQGNLYRPLLRGQAQIPKLMSNMRPQDSWRGPPPLFQQQRFDRGVGAEPLLPWNRMLQTQNAAFQPNQYQMLAGPGGYPPRRDDRGGRQGYPREGRKYPLSPPSGRYNWN.

Residues K261–G278 form a CCHC-type zinc finger. K286 bears the N6-acetyllysine mark. The interval K408–N508 is disordered. Residues R416–K426 show a composition bias toward basic residues. T439 carries the post-translational modification Phosphothreonine. Polar residues predominate over residues S445–R458. Phosphoserine occurs at positions 448, 471, 473, 475, 482, 487, 499, 501, and 678. Low complexity predominate over residues N468–S482. Asymmetric dimethylarginine; alternate occurs at positions 824, 847, and 851. 3 positions are modified to omega-N-methylarginine; alternate: R824, R847, and R851. Residue R880 is modified to Asymmetric dimethylarginine. Asymmetric dimethylarginine; alternate is present on R883. At R883 the chain carries Omega-N-methylarginine; alternate. Omega-N-methylarginine is present on R895. Residues L912–N950 are disordered. Residues P920–K937 show a composition bias toward basic and acidic residues. At R946 the chain carries Asymmetric dimethylarginine; alternate. R946 carries the omega-N-methylarginine; alternate modification.

The protein belongs to the 5'-3' exonuclease family. XRN2/RAT1 subfamily. In terms of assembly, interacts with POLR2A and SMN1/SMN2. Interacts with CDKN2AIP and NKRF. Interacts with CDKN2AIPNL; the interaction is direct. Interacts with TRIM71 (via NHL repeats) in an RNA-dependent manner. Interacts with DHX34; the interaction is RNA-independent.

Its subcellular location is the nucleus. The protein localises to the nucleolus. In terms of biological role, possesses 5'-&gt;3' exoribonuclease activity. May promote the termination of transcription by RNA polymerase II. During transcription termination, cleavage at the polyadenylation site liberates a 5' fragment which is subsequently processed to form the mature mRNA and a 3' fragment which remains attached to the elongating polymerase. The processive degradation of this 3' fragment by this protein may promote termination of transcription. Binds to RNA polymerase II (RNAp II) transcription termination R-loops formed by G-rich pause sites. This chain is 5'-3' exoribonuclease 2 (XRN2), found in Pongo abelii (Sumatran orangutan).